Consider the following 349-residue polypeptide: tRNA pseudouridine synthase D (349 aa).

Substrate is bound at residue Phe-26. The active-site Nucleophile is Asp-79. Asn-128 is a binding site for substrate. The 149-residue stretch at 154–302 (GVPNYFGSQR…VEGSRRAVLL (149 aa)) folds into the TRUD domain. Phe-328 serves as a coordination point for substrate.

Belongs to the pseudouridine synthase TruD family.

It carries out the reaction uridine(13) in tRNA = pseudouridine(13) in tRNA. In terms of biological role, responsible for synthesis of pseudouridine from uracil-13 in transfer RNAs. This Yersinia pseudotuberculosis serotype O:1b (strain IP 31758) protein is tRNA pseudouridine synthase D.